The following is a 454-amino-acid chain: Adenosylmethionine-8-amino-7-oxononanoate aminotransferase (454 aa).

119-120 (GA) contacts pyridoxal 5'-phosphate. Tyr-152 lines the substrate pocket. A pyridoxal 5'-phosphate-binding site is contributed by Asp-257. Residues Lys-286, Gly-321, and Arg-416 each coordinate substrate. Lys-286 carries the N6-(pyridoxal phosphate)lysine modification.

The protein belongs to the class-III pyridoxal-phosphate-dependent aminotransferase family. BioA subfamily. Homodimer. It depends on pyridoxal 5'-phosphate as a cofactor.

The protein resides in the cytoplasm. The enzyme catalyses (8S)-8-amino-7-oxononanoate + S-adenosyl-L-methionine = S-adenosyl-4-methylsulfanyl-2-oxobutanoate + (7R,8S)-7,8-diammoniononanoate. The protein operates within cofactor biosynthesis; biotin biosynthesis; 7,8-diaminononanoate from 8-amino-7-oxononanoate (SAM route): step 1/1. Catalyzes the transfer of the alpha-amino group from S-adenosyl-L-methionine (SAM) to 7-keto-8-aminopelargonic acid (KAPA) to form 7,8-diaminopelargonic acid (DAPA). It is the only aminotransferase known to utilize SAM as an amino donor. The protein is Adenosylmethionine-8-amino-7-oxononanoate aminotransferase of Anoxybacillus flavithermus (strain DSM 21510 / WK1).